The chain runs to 295 residues: Glutamyl-Q tRNA(Asp) synthetase (295 aa).

Residues 5–9 (RFAPS) and E41 contribute to the L-glutamate site. Residues 8 to 18 (PSPTGLLHIGS) carry the 'HIGH' region motif. Residues C97, C99, Y117, and C121 each contribute to the Zn(2+) site. Residues Y178 and R196 each contribute to the L-glutamate site. Residues 234 to 238 (KWSKQ) carry the 'KMSKS' region motif. K237 contributes to the ATP binding site.

It belongs to the class-I aminoacyl-tRNA synthetase family. GluQ subfamily. It depends on Zn(2+) as a cofactor.

Its function is as follows. Catalyzes the tRNA-independent activation of glutamate in presence of ATP and the subsequent transfer of glutamate onto a tRNA(Asp). Glutamate is transferred on the 2-amino-5-(4,5-dihydroxy-2-cyclopenten-1-yl) moiety of the queuosine in the wobble position of the QUC anticodon. The chain is Glutamyl-Q tRNA(Asp) synthetase from Neisseria meningitidis serogroup C (strain 053442).